The sequence spans 184 residues: MNMKNNNLVSSYARALFHVSGSRLGIIRKEVEFLLAFFKDQDVFVYLSHPMVSLLHKKEAILSIKENLSENLVKFIMVTLANKRSRLLILILEKFLNLVRESENELEITIKSAEILKKPDIKIITESLNFLGKIIKVSHVVDPSILGGFVVRYGFNVIDASLKSYLDRLVDLSKMEMLKIRNCI.

It belongs to the ATPase delta chain family. As to quaternary structure, F-type ATPases have 2 components, F(1) - the catalytic core - and F(0) - the membrane proton channel. F(1) has five subunits: alpha(3), beta(3), gamma(1), delta(1), epsilon(1). F(0) has three main subunits: a(1), b(2) and c(10-14). The alpha and beta chains form an alternating ring which encloses part of the gamma chain. F(1) is attached to F(0) by a central stalk formed by the gamma and epsilon chains, while a peripheral stalk is formed by the delta and b chains.

Its subcellular location is the cell membrane. In terms of biological role, f(1)F(0) ATP synthase produces ATP from ADP in the presence of a proton or sodium gradient. F-type ATPases consist of two structural domains, F(1) containing the extramembraneous catalytic core and F(0) containing the membrane proton channel, linked together by a central stalk and a peripheral stalk. During catalysis, ATP synthesis in the catalytic domain of F(1) is coupled via a rotary mechanism of the central stalk subunits to proton translocation. This protein is part of the stalk that links CF(0) to CF(1). It either transmits conformational changes from CF(0) to CF(1) or is implicated in proton conduction. In Wolbachia pipientis subsp. Culex pipiens (strain wPip), this protein is ATP synthase subunit delta.